Consider the following 208-residue polypeptide: Histone 24 (208 aa).

S2 bears the N-acetylserine mark. K14 carries the post-translational modification N6-methyllysine. Residues 37-113 (AHPPYINMIK…GANGRFRVPE (77 aa)) form the H15 domain. The segment at 101–208 (AGSGANGRFR…KKAAKPAAKA (108 aa)) is disordered. The segment covering 114–138 (KAAAAKKPAAAKKPAAAKKPAAAKK) has biased composition (low complexity). Composition is skewed to basic residues over residues 144–155 (KAKKPAAAKPKK) and 162–202 (KVKK…KKAA).

The protein belongs to the histone H1/H5 family. Interacts with nmad-1. Interacts (when monomethylated at Lys-14) with chromobox protein homolog hpl-1; the interaction is direct. Interacts (when monomethylated at Lys-14) with histone H3 (when trimethylated on 'Lys-27'); the interaction is direct. Post-translationally, methylation at lysine 14 is necessary to regulate male tail development.

It localises to the nucleus. The protein localises to the chromosome. The protein resides in the cytoplasm. Its function is as follows. Histones H1 are necessary for the condensation of nucleosome chains into higher-order structures. Probably does not act as global transcriptional repressor. Acting in concert with chromobox protein homologs hpl-1 and hpl-2, involved in reproduction, somatic gonad development, male tail development, and vulval cell fate decisions; perhaps as a result of modulating expression of Hox genes mab-5 and egl-5. Plays a role in linking epigenetic regulation with the innate immune response. This Caenorhabditis elegans protein is Histone 24.